The following is a 311-amino-acid chain: MYPAPDMSLWQGRIDSQEGADARRWHQWMRPYADDAEAASVLLGFASDEGVRRNQGRQGARHGPPALRRALANLAWHGEQAIYDAGDIVAGDDLEAAQECYAQRVADLLARGHRVVGLGGGHEIAYASFAGLARHLSRHERLPRIGILNFDAHFDLRHAERASSGTPFRQIAELCQASDWPFAYCCLGISRLSNTAALFDQAQRLGVRYLLDRQLQPWNLERSEAFLDSFLQSVDHLYLTVCLDVLPAAQAPGVSAPSAHGVEMSVVEHLVRRAKASGKLRLADIAELNPQLDSDQRTARIAARLVDSLVN.

Mn(2+)-binding residues include histidine 122, aspartate 151, histidine 153, aspartate 155, cysteine 242, and aspartate 244.

It belongs to the arginase family. Mn(2+) serves as cofactor.

The catalysed reaction is N-formimidoyl-L-glutamate + H2O = formamide + L-glutamate. It participates in amino-acid degradation; L-histidine degradation into L-glutamate; L-glutamate from N-formimidoyl-L-glutamate (hydrolase route): step 1/1. Catalyzes the conversion of N-formimidoyl-L-glutamate to L-glutamate and formamide. This chain is Formimidoylglutamase, found in Pseudomonas aeruginosa (strain UCBPP-PA14).